We begin with the raw amino-acid sequence, 316 residues long: Olfactory receptor 5P79 (316 aa).

Topologically, residues 1–28 are extracellular; the sequence is MGILKDGNHTAVTEFILLGLTDDPVLKV. The N-linked (GlcNAc...) asparagine glycan is linked to Asn-8. Residues 29–49 form a helical membrane-spanning segment; it reads VLFTIILCIYLVTVSGNLSTI. The Cytoplasmic segment spans residues 50 to 57; it reads LLIRVSSQ. The chain crosses the membrane as a helical span at residues 58-78; it reads LHHPMYFFLSHLASVDIGISS. Residues 79 to 102 lie on the Extracellular side of the membrane; it reads SVTPNMLVNFLLERSTISYLGCGI. An intrachain disulfide couples Cys-100 to Cys-192. The chain crosses the membrane as a helical span at residues 103–123; the sequence is QLGSGAFFGSTESFLLAAMAY. The Cytoplasmic segment spans residues 124–136; sequence DHFMAICNPLLYS. The helical transmembrane segment at 137 to 157 threads the bilayer; sequence TKMSTQVCIQLLVGSYIGGFL. Over 158–199 the chain is Extracellular; the sequence is NASSFILSFFSFLFCGPNKVNHFFCDFTPLVELSCSDNSVLL. The helical transmembrane segment at 200-220 threads the bilayer; it reads ILDSFSAGSIIVITVLVIAIS. Over 221 to 240 the chain is Cytoplasmic; that stretch reads YTYILITILKMHSTEGRHKA. Residues 241 to 261 form a helical membrane-spanning segment; it reads FSTCTSHLTAVTVFYGTVTFI. Over 262-274 the chain is Extracellular; that stretch reads YVMPKSSYSTDQN. A helical transmembrane segment spans residues 275–297; it reads KVLSVFYMIAIAIPMLNPLIYSL. Over 298–316 the chain is Cytoplasmic; that stretch reads RNNEIKNALKRQLSKKTFS.

The protein belongs to the G-protein coupled receptor 1 family.

The protein resides in the cell membrane. In terms of biological role, potential odorant receptor. The polypeptide is Olfactory receptor 5P79 (Mus musculus (Mouse)).